Reading from the N-terminus, the 361-residue chain is Peptide chain release factor 1 (361 aa).

N5-methylglutamine is present on Q237. Positions 286–306 are disordered; that stretch reads AKQDQEQAAKRKSLVGSGDRS.

It belongs to the prokaryotic/mitochondrial release factor family. Methylated by PrmC. Methylation increases the termination efficiency of RF1.

It is found in the cytoplasm. Its function is as follows. Peptide chain release factor 1 directs the termination of translation in response to the peptide chain termination codons UAG and UAA. In Coxiella burnetii (strain CbuG_Q212) (Coxiella burnetii (strain Q212)), this protein is Peptide chain release factor 1.